Reading from the N-terminus, the 1175-residue chain is DNA ligase 3 (1175 aa).

The tract at residues 195 to 243 (HDFDNDNGDGDDGDGDDNDDDDGDGDSDSDKKKKKSSGGSGSDSGSKKK) is disordered. Over residues 199 to 221 (NDNGDGDDGDGDDNDDDDGDGDS) the composition is skewed to acidic residues. Glutamate 281 contributes to the ATP binding site. The N6-AMP-lysine intermediate role is filled by lysine 283. Residues arginine 288 and arginine 303 each contribute to the ATP site. Positions 334 and 432 each coordinate Mg(2+). Residues lysine 437, arginine 448, and lysine 452 each coordinate ATP. 2 disordered regions span residues 612 to 669 (PVGK…LKFV) and 829 to 869 (KSSP…KRGR). Composition is skewed to low complexity over residues 622-635 (TTTT…TTTT) and 829-859 (KSSP…SSPS). Residues 883–976 (PSLPIFEDVN…KLLPLHEDYI (94 aa)) enclose the BRCT 1 domain. The interval 984-1036 (PDYSQSSSSSSMSIEEEKIVVTTTSDDPSEGNQQQQDKKVIKESKIIQSKDHS) is disordered. The span at 987 to 996 (SQSSSSSSMS) shows a compositional bias: low complexity. Polar residues predominate over residues 1004–1018 (VTTTSDDPSEGNQQQ). A compositionally biased stretch (basic and acidic residues) spans 1019–1036 (QDKKVIKESKIIQSKDHS). A BRCT 2 domain is found at 1067-1174 (HLLSIFQECI…DLLDVKNYKL (108 aa)).

The protein belongs to the ATP-dependent DNA ligase family. Requires Mg(2+) as cofactor.

It is found in the nucleus. It carries out the reaction ATP + (deoxyribonucleotide)n-3'-hydroxyl + 5'-phospho-(deoxyribonucleotide)m = (deoxyribonucleotide)n+m + AMP + diphosphate.. Functionally, the alpha isoform interacts with DNA-repair protein XRCC1 and can correct defective DNA strand-break repair and sister chromatid exchange following treatment with ionizing radiation and alkylating agents. The beta isoform does not interact with XRCC1 and may be specifically involved in the completion of homologous recombination events that occur during meiotic prophase. The chain is DNA ligase 3 (lig3) from Dictyostelium discoideum (Social amoeba).